A 113-amino-acid chain; its full sequence is Protein suex-1 (113 aa).

A signal peptide spans 1-22 (MQSLLVFCLATIILSNFTEASA).

The protein is Protein suex-1 of Caenorhabditis elegans.